The chain runs to 347 residues: Trace amine-associated receptor 4 (347 aa).

Residues 1-37 (MNTPDPWSSPEVQFCFAAANSSCPRKARPALVVCAMY) are Extracellular-facing. Asn-20 is a glycosylation site (N-linked (GlcNAc...) asparagine). Intrachain disulfides connect Cys-23–Cys-187 and Cys-106–Cys-191. Residues 38–58 (LIMIGAIVMTMLGNMAVIISI) traverse the membrane as a helical segment. The Cytoplasmic segment spans residues 59 to 69 (AHFKQLHSPTN). Residues 70 to 90 (FLILSMATTDFLLSCVVMPFS) form a helical membrane-spanning segment. The Extracellular portion of the chain corresponds to 91 to 110 (MIRSIESCWYFGDLFCKVHS). The chain crosses the membrane as a helical span at residues 111-129 (CCDIMLCTTSIFHLCFISV). Over 130–149 (DRHYAVCDPLHYVTQITTRV) the chain is Cytoplasmic. The chain crosses the membrane as a helical span at residues 150–170 (VGVFLLISWSVPIFFAFGLVF). Over 171–197 (SELNLIGAEDFVAAIDCTGLCVLIFNK) the chain is Extracellular. The interval 175–188 (LIGAEDFVAAIDCT) is extracellular Loop 2 (ECL2). The helical transmembrane segment at 198 to 218 (LWGVLASFIAFFLPGTVMVGI) threads the bilayer. Residues 219–260 (YIHIFTVAQKHARQIGTGPRTKQALSESKMKATSKKESKATK) lie on the Cytoplasmic side of the membrane. Residues 261–281 (TLSIVMGVFVLCWLPFFVLTI) traverse the membrane as a helical segment. The Extracellular portion of the chain corresponds to 282–296 (TDPFIDFTTPEDLYN). Residues 297–317 (VFLWLGYFNSTFNPIIYGMFY) form a helical membrane-spanning segment. The Cytoplasmic segment spans residues 318 to 347 (PWFRKALRMIVTGTIFRSDSSTSSLHPAHP).

The protein belongs to the G-protein coupled receptor 1 family. As to expression, specifically expressed in neurons of the olfactory epithelium, to discrete glomeruli predominantly localized to a confined bulb region. Present in the dorsal area of the main olfactory epithelium.

It localises to the cell membrane. Olfactory receptor specific for 2-phenylethylamine, a trace amine present at high concentration in the urine of carnivore species, playing a key role in fear and avoidance responses. 2-phenylethylamine acts as a kairomone in the chemical detection of carnivore odor and triggers fear in mice. This receptor is probably mediated by the G(s)-class of G-proteins which activate adenylate cyclase. The polypeptide is Trace amine-associated receptor 4 (Mus musculus (Mouse)).